The chain runs to 301 residues: Acetylglutamate kinase (301 aa).

Substrate contacts are provided by residues 68-69 (GG), arginine 90, and asparagine 195.

Belongs to the acetylglutamate kinase family. ArgB subfamily.

Its subcellular location is the cytoplasm. It catalyses the reaction N-acetyl-L-glutamate + ATP = N-acetyl-L-glutamyl 5-phosphate + ADP. It participates in amino-acid biosynthesis; L-arginine biosynthesis; N(2)-acetyl-L-ornithine from L-glutamate: step 2/4. In terms of biological role, catalyzes the ATP-dependent phosphorylation of N-acetyl-L-glutamate. This chain is Acetylglutamate kinase, found in Pseudomonas putida (strain GB-1).